A 147-amino-acid polypeptide reads, in one-letter code: Hemoglobin subunit gamma (147 aa).

Residues 3-147 (HFTAEEKAAI…VANALAYKYH (145 aa)) form the Globin domain. Heme b contacts are provided by histidine 64 and histidine 93.

Belongs to the globin family. Heterotetramer of two alpha chains and two gamma chains in fetal hemoglobin (Hb F). As to expression, red blood cells.

Gamma chains make up the fetal hemoglobin F, in combination with alpha chains. This is Hemoglobin subunit gamma (HBG) from Loxodonta africana (African elephant).